A 75-amino-acid chain; its full sequence is Endogenous retrovirus group K member 24 Np9 protein (75 aa).

Residues 22 to 43 are disordered; that stretch reads TAPKRQRPSRTGHDDDGGFVEK. A compositionally biased stretch (basic and acidic residues) spans 32 to 43; it reads TGHDDDGGFVEK.

Transcript detectable in many tumor cell lines and tumor tissues.

The protein resides in the nucleus. In terms of biological role, may possess a function in tumorigenesis. This Homo sapiens (Human) protein is Endogenous retrovirus group K member 24 Np9 protein (ERVK-24).